A 1372-amino-acid chain; its full sequence is DNA-directed RNA polymerase subunit beta (1372 aa).

This sequence belongs to the RNA polymerase beta chain family. The RNAP catalytic core consists of 2 alpha, 1 beta, 1 beta' and 1 omega subunit. When a sigma factor is associated with the core the holoenzyme is formed, which can initiate transcription.

The enzyme catalyses RNA(n) + a ribonucleoside 5'-triphosphate = RNA(n+1) + diphosphate. Functionally, DNA-dependent RNA polymerase catalyzes the transcription of DNA into RNA using the four ribonucleoside triphosphates as substrates. This chain is DNA-directed RNA polymerase subunit beta, found in Psychrobacter sp. (strain PRwf-1).